Consider the following 94-residue polypeptide: DNA-directed RNA polymerase subunit omega (94 aa).

It belongs to the RNA polymerase subunit omega family. As to quaternary structure, the RNAP catalytic core consists of 2 alpha, 1 beta, 1 beta' and 1 omega subunit. When a sigma factor is associated with the core the holoenzyme is formed, which can initiate transcription.

The catalysed reaction is RNA(n) + a ribonucleoside 5'-triphosphate = RNA(n+1) + diphosphate. Functionally, promotes RNA polymerase assembly. Latches the N- and C-terminal regions of the beta' subunit thereby facilitating its interaction with the beta and alpha subunits. The polypeptide is DNA-directed RNA polymerase subunit omega (Shewanella pealeana (strain ATCC 700345 / ANG-SQ1)).